A 334-amino-acid chain; its full sequence is MSLLCYNRGCGQRYDPEGNSDDSCTYHPGVPVFHDALKGWSCCKRRTTDFSDFLSIVGCTKGQHNNEKPPEPVKPEVKITSDKKELADFKPKFNELIIQAPKPIECINRPSSDEPMAKLQLKISASLKQALDKLKLSENDKTVTDESGEIKIGTSCKNGGCLKTFAGPQSNEEVCHYHSGVPIFHEGMKYWSCCRRKTSDFNTFLSLEGCTKGTHLWTKKDDGKKVVPCRHDWHQTGAGVTISIYAKNSMPELSYVEANSTVVNIQVVFEGEKTFQQNVQLWGVIDVAKSYVSLTATKVEVFLKKAEFMTWARLELPQKAPAPSEQNETPEEQE.

Residues Cys-5, Cys-10, Cys-24, His-27, Cys-42, Cys-43, Cys-59, His-64, Cys-156, Cys-161, Cys-175, His-178, Cys-193, Cys-194, Cys-210, and His-215 each coordinate Zn(2+). CHORD domains lie at 5–64 (CYNR…KGQH) and 156–215 (CKNG…KGTH). In terms of domain architecture, CS spans 226–315 (VVPCRHDWHQ…AEFMTWARLE (90 aa)).

Its function is as follows. Regulates centrosome duplication. This Xenopus laevis (African clawed frog) protein is Cysteine and histidine-rich domain-containing protein 1 (chordc1).